The sequence spans 90 residues: Probable Fe(2+)-trafficking protein (90 aa).

It belongs to the Fe(2+)-trafficking protein family.

Its function is as follows. Could be a mediator in iron transactions between iron acquisition and iron-requiring processes, such as synthesis and/or repair of Fe-S clusters in biosynthetic enzymes. This Vibrio atlanticus (strain LGP32) (Vibrio splendidus (strain Mel32)) protein is Probable Fe(2+)-trafficking protein.